A 1852-amino-acid polypeptide reads, in one-letter code: MVGTLPAGHTPSHVQSSLPSLPAHLQSDTHLTAHLASRFHVGLPTARLSSHALISLNNYTSSSKGPDGGKEGSAMGETEDLARRAYTRLGARGENQAIVFLGESGAGKTTLRSHLLSSFLSFSSTPLSSKLSYAAFIFDTLTTTKSLTTPTASKAGLFLELQYDASSSVNPTLIGGKIIDHRLERSRIASVPTGERSFHVLYYLLAGTSAAEKAHLGLDSPIHVTTAGGRLSSADHKRWRYLGHPTQLKVGINDADGFQHFKTALRKLEFPRSEIAEICQILAAILHIGQLDFGSGQATLTGAEESGGYSHEGGETVTVVKNKDVLSIIAAFLGLGVGELEASFGYRTKTIHRERVTVMLDPKGARRSADELSRVLYSLLVAYVIENVNQRICAAEDSVANTVSIIDFPGFAQACSTGSTLDQLLNNAACESLYNFCLRSFFDRKADMLEREEVAVPATSYFDNTDAVRGLLKQGNGLLSILDDQTRRGRTDAQFVEAVRRRFENKNPAITAGASGSGNGYGMVSQNARSSFTVKHFAGEVDYSATGLLEENGEVISGDLMNLMKSTRSDFVRELFGQEALQTVAHPKEKTAIMQAQVSSKPLRMPSMARRKTSPASRLTFDATPAEDPYETESQTGSSAKNSSAKRKSGMLMGGMQCAAGQFLSSLDIVNKCLTSGNLNPYFVFCLKPNDRRIANQFDSKCVRTQIQTLGIAEISQRLRNADFSVFLPFAEFLGLAEVGNVVVGSDKEKSEVVLDEKRWPGNEARVGSTGVFLSERCWADLAKVGERVIPSFAAEDDGGDALLHPRTANYADSKVRLLNPSDHSPGAYIYGDESKQASNTSRDFDGRSDAGYSAFNSGDMFHNLETREQMLEKGNEKQMEEVDEVPVSGSRKRWMAIVWLLTFYIPTPAIRYIGRMKRKDIQIAWREKFAINLLIWLACAIAVFIIVGFPSLICPTQHVYSPAELSSHDGKDGHSSYTSIRGLVLDLGEFMDSHYPGIVPDSALKKYAGVDSTALFPVQVSALCLGKDGNVDPKVLLDYKPTNFSGSVTSTSSGDPNSVYHDFRYFRDDYRPDWYAEQMIYLRANYYKGWIGYSSEYLHTLASKSQNVASINGKIYDLTSYIAGGRRIQGREGDDTTGIDTDFMDSLVVDLFQQKAGEDITKYWEDLPLTPKLRVDMMDCLNNLFIVGHVDTRNSTQCQFARYFILAISVLICSVIVFKFFAALQFGKKNVPENLDKFIICQVPAYTEDEESLRRAIDSMARMQYDDKRKLLVVICDGMIIGQGNDRPTPRIVLDILGVPESVDPEPLSFESLGEGMKQHNMGKVYSGLYEVQGHIVPFLVVVKVGKPSEVSRPGNRGKRDSQMVLMRFLNRVHYNLPMSPMELEMHHHIRNIIGVNPTFYEFILQVDADTVVAPDAATRMVSSCLNDTRIIGVCGETSLTNAKTSAVTMIQVYEYYISHNLTKAFESLFGSITCLPGCFTMYRIRSAESGKPLFVSKEIVEAYSEIRVDTLHMKNLLHLGEDRYLTTLLLKHHPKFKTKYNFRAQAYTIAPESWTVFLSQRRRWINSTVHNLVELIPLQQLCGFCCFSMRFVVFIDLISTIIMPVTVAYIVYLIVWLVRDTSTIPWTSFLLLAAIYGLQAIIFIVRRKWEMIGWMIIYILAIPVYSLALPLYSFWHMDDFSWGNTRIITGEKGRKIVISDEGKFDPASIPKKRWEEYQAELWEAQTSRDDRSEISGISYGTKYHPATQSEYGFPGSRPMSQLELPRHMSRMSLAPSEMMSRHMDMELEDVNLPSDDAILSEIRDILRTADLMTVTKKNIKQELERRFGVNLDAKRPYINSATEAVLSGNL.

Residues 1-20 are disordered; that stretch reads MVGTLPAGHTPSHVQSSLPS. One can recognise a Myosin motor domain in the interval 1–787; it reads MVGTLPAGHT…CWADLAKVGE (787 aa). N58 carries an N-linked (GlcNAc...) asparagine glycan. 102-109 is a binding site for ATP; sequence GESGAGKT. The tract at residues 599–646 is disordered; it reads SSKPLRMPSMARRKTSPASRLTFDATPAEDPYETESQTGSSAKNSSAK. The N-linked (GlcNAc...) asparagine glycan is linked to N642. Positions 667–691 are actin-binding; that stretch reads LDIVNKCLTSGNLNPYFVFCLKPND. N-linked (GlcNAc...) asparagine glycosylation is present at N840. A run of 2 helical transmembrane segments spans residues 895 to 915 and 930 to 950; these read WMAIVWLLTFYIPTPAIRYIG and FAINLLIWLACAIAVFIIVGF. Positions 958 to 1017 constitute a Cytochrome b5 heme-binding domain; sequence QHVYSPAELSSHDGKDGHSSYTSIRGLVLDLGEFMDSHYPGIVPDSALKKYAGVDSTALF. N-linked (GlcNAc...) asparagine glycosylation is found at N1044 and N1195. The helical transmembrane segment at 1205-1225 threads the bilayer; that stretch reads FILAISVLICSVIVFKFFAAL. Residues N1428, N1462, and N1568 are each glycosylated (N-linked (GlcNAc...) asparagine). The next 3 helical transmembrane spans lie at 1600–1620, 1626–1646, and 1653–1673; these read ISTIIMPVTVAYIVYLIVWLV, IPWTSFLLLAAIYGLQAIIFI, and MIGWMIIYILAIPVYSLALPL. The DEK-C domain occupies 1794-1849; that stretch reads LPSDDAILSEIRDILRTADLMTVTKKNIKQELERRFGVNLDAKRPYINSATEAVLS.

It in the N-terminal section; belongs to the TRAFAC class myosin-kinesin ATPase superfamily. Myosin family. This sequence in the C-terminal section; belongs to the chitin synthase family. Class V subfamily. Binds F-actin via its N-terminal myosin motor-like domain (MMD). Interacts with kibesin kinA.

It is found in the cell membrane. It localises to the cell septum. The protein localises to the cell tip. It carries out the reaction [(1-&gt;4)-N-acetyl-beta-D-glucosaminyl](n) + UDP-N-acetyl-alpha-D-glucosamine = [(1-&gt;4)-N-acetyl-beta-D-glucosaminyl](n+1) + UDP + H(+). Its function is as follows. Polymerizes chitin, a structural polymer of the cell wall and septum, by transferring the sugar moiety of UDP-GlcNAc to the non-reducing end of the growing chitin polymer. Plays an important role in polarized hyphal cell wall synthesis and maintenance of cell wall integrity. Its role in growth and morphogenesis is particularly important under low osmotic conditions. The polypeptide is Chitin synthase csmA (Emericella nidulans (Aspergillus nidulans)).